The chain runs to 54 residues: Metallothionein-4 (54 aa).

It belongs to the metallothionein superfamily. Type 11 family.

The sequence is that of Metallothionein-4 (MTP4) from Yarrowia lipolytica (strain CLIB 122 / E 150) (Yeast).